The following is a 137-amino-acid chain: Small ribosomal subunit protein uS19 (137 aa).

The protein belongs to the universal ribosomal protein uS19 family.

Its function is as follows. Protein S19 forms a complex with S13 that binds strongly to the 16S ribosomal RNA. This chain is Small ribosomal subunit protein uS19, found in Methanospirillum hungatei JF-1 (strain ATCC 27890 / DSM 864 / NBRC 100397 / JF-1).